A 1678-amino-acid chain; its full sequence is Nuclear pore complex protein Nup98-Nup96 (1678 aa).

Low complexity predominate over residues 1 to 11; it reads MFGQNKSFGSS. Disordered stretches follow at residues 1–41, 68–100, 301–366, 441–473, and 603–631; these read MFGQ…QPAN, SSIF…FGST, TTGS…GAPA, FGNT…TQAT, and SKEA…RSVH. The segment covering 12-22 has biased composition (gly residues); that stretch reads SFGGGSSGSGL. Composition is skewed to low complexity over residues 23–38 and 73–83; these read FGQN…LFGQ and SPQQPQNNQSS. Over residues 306–329 the composition is skewed to polar residues; it reads LFGNQQPQTNTGGSLFGNTQNQNQ. Low complexity predominate over residues 345–366; it reads FGQAQQQPQQQSSGFSFGGAPA. Composition is skewed to polar residues over residues 456–473 and 615–628; these read SQPQ…TQAT and RNST…LTNR. Residues 777-919 enclose the Peptidase S59 domain; the sequence is KPDYFSLPTI…GSWVFRVDHF (143 aa). The active-site Nucleophile is Ser-920.

This sequence belongs to the nucleoporin GLFG family. In terms of assembly, part of the NPC. Post-translationally, the Nup98 and Nup96 chains are autoproteolytically processed from a single precursor protein.

The protein resides in the cytoplasmic granule. It localises to the nucleus membrane. The protein localises to the nucleus. Its subcellular location is the nuclear pore complex. It is found in the nucleus envelope. The protein resides in the chromosome. Its function is as follows. Nup98 and Nup96 play a role in the bidirectional transport across the nucleoporin complex (NPC). Required for the nuclear import of hcp-4 during mitotic prophase, this step is essential for centrosome assembly and resolution. Regulates nucleoporin npp-5 localization to the nuclear membrane during interphase and to kinetochores during metaphase. Has a role in P granule integrity; may promote the 'liquid phase' of P granules by increasing the number of interacting RNA-protein complexes. Binds nos-2 mRNA, probably indirectly, and promotes its accumulation in P granules. This Caenorhabditis elegans protein is Nuclear pore complex protein Nup98-Nup96.